Here is a 440-residue protein sequence, read N- to C-terminus: Chitinase-like protein Idgf5 (440 aa).

A signal peptide spans 1-27 (MRNKMIYFNFHLFVIIFANLQIFQVQA). The 412-residue stretch at 28 to 439 (ANIFCYYDTQ…KSIHNAFKKF (412 aa)) folds into the GH18 domain. Cys32 and Cys56 are disulfide-bonded. 3 N-linked (GlcNAc...) asparagine glycosylation sites follow: Asn126, Asn283, and Asn403. A disulfide bridge links Cys340 with Cys421.

It belongs to the glycosyl hydrolase 18 family. IDGF subfamily. In terms of processing, glycosylated.

It localises to the secreted. Functionally, cooperates with insulin-like peptides to stimulate the proliferation, polarization and motility of imaginal disk cells. May act by stabilizing the binding of insulin-like peptides to its receptor through a simultaneous interaction with both molecules to form a multiprotein signaling complex. This is Chitinase-like protein Idgf5 (Idgf5) from Glossina morsitans morsitans (Savannah tsetse fly).